A 482-amino-acid chain; its full sequence is 6-phosphogluconate dehydrogenase, decarboxylating (482 aa).

Residues 17 to 22 (GLAVMG), 40 to 42 (NRS), 82 to 84 (VKA), and asparagine 110 each bind NADP(+). Residues asparagine 110 and 136 to 138 (SGG) contribute to the substrate site. Lysine 193 serves as the catalytic Proton acceptor. 196–197 (HN) is a binding site for substrate. The active-site Proton donor is the glutamate 200. Tyrosine 201, lysine 272, arginine 299, arginine 457, and histidine 463 together coordinate substrate.

Belongs to the 6-phosphogluconate dehydrogenase family. As to quaternary structure, homodimer.

It carries out the reaction 6-phospho-D-gluconate + NADP(+) = D-ribulose 5-phosphate + CO2 + NADPH. It functions in the pathway carbohydrate degradation; pentose phosphate pathway; D-ribulose 5-phosphate from D-glucose 6-phosphate (oxidative stage): step 3/3. In terms of biological role, catalyzes the oxidative decarboxylation of 6-phosphogluconate to ribulose 5-phosphate and CO(2), with concomitant reduction of NADP to NADPH. The polypeptide is 6-phosphogluconate dehydrogenase, decarboxylating (gnd) (Synechocystis sp. (strain ATCC 27184 / PCC 6803 / Kazusa)).